Reading from the N-terminus, the 96-residue chain is MINDILTEDRRLVILRSLMDCNNEANESILQDCLDAYGHNVSRDVVRGQIDWLAEQQLVTVENLRGFYVVTLTSRGQDVAEGRARVAGVKRPRPRA.

The protein localises to the host cytoplasm. This is an uncharacterized protein from Escherichia phage Mu (Bacteriophage Mu).